Reading from the N-terminus, the 246-residue chain is MAGHSKWANIQHRKGRQDAVRAKLFSKLSKEITVAAKMGDPDPDKNPRLRLAVKEAKSQSMPKDNIDRAIKKSQAGDGDEYEEIRYEGYGPNGVAVIVEAMTDNRNRTASTVRSTFTKNGGNLGETGSVGFMFDRKGTVTYPADVGDADTVLMAAIEAGAEDVESSEDGHVIWCADTDLNEVATALEAELGESEQTKLVWRPTTTTELDLEGMQKLMRLIEALEDDDDVQRVTANFEASDEVMEQL.

The protein belongs to the TACO1 family.

The protein resides in the cytoplasm. The protein is Probable transcriptional regulatory protein RD1_2018 of Roseobacter denitrificans (strain ATCC 33942 / OCh 114) (Erythrobacter sp. (strain OCh 114)).